The sequence spans 2118 residues: Cilia- and flagella-associated protein 65 (2118 aa).

A helical transmembrane segment spans residues 6–26; sequence GSLRALLLAAAAAAAAAAGAV. The MSP domain occupies 615-736; the sequence is FLHSNPEFGP…HTPRLTTDLP (122 aa). 3 disordered regions span residues 1007–1029, 1764–1909, and 1924–1958; these read APLL…LDAG, SGGS…DDFA, and AGGG…APPR. A compositionally biased stretch (gly residues) spans 1825-1834; sequence GGAGGAPGGD. The span at 1840 to 1849 shows a compositional bias: low complexity; it reads RPGTPSMTAA. Residues 1850–1859 are compositionally biased toward basic residues; it reads AHHHHHHPRH. 2 stretches are compositionally biased toward low complexity: residues 1892–1902 and 1936–1949; these read SISGAPDPDSA and PGGS…ELAP. The stretch at 2016–2045 forms a coiled coil; the sequence is AVRAAAEAARAEAEARAAAEAATKAAAEAE.

Belongs to the CFAP65 family.

The protein resides in the cell projection. It is found in the cilium. Its subcellular location is the flagellum membrane. The protein localises to the cytoplasm. In terms of biological role, may play a role in flagellar formation and mobility. This chain is Cilia- and flagella-associated protein 65, found in Chlamydomonas reinhardtii (Chlamydomonas smithii).